The chain runs to 452 residues: Glycine receptor subunit alpha-2 (452 aa).

The N-terminal stretch at 1–27 (MYRQLVNILTALFAFFLGTNHFREAFC) is a signal peptide. Over 28–256 (KDHDSRSGKH…KFHLERQMGY (229 aa)) the chain is Extracellular. An N-linked (GlcNAc...) asparagine glycan is attached at Asn-72. Arg-99 provides a ligand contact to glycine. Arg-99 is a binding site for strychnine. A glycan (N-linked (GlcNAc...) asparagine) is linked at Asn-103. Ser-163 lines the glycine pocket. A disulfide bond links Cys-172 and Cys-186. Residues Glu-226 and Glu-228 each contribute to the Zn(2+) site. Cys-232 and Cys-243 form a disulfide bridge. Thr-238 is a glycine binding site. Residue His-249 coordinates Zn(2+). The helical transmembrane segment at 257–278 (YLIQMYIPSLLIVILSWVSFWI) threads the bilayer. Over 279 to 283 (NMDAA) the chain is Cytoplasmic. The helical transmembrane segment at 284–304 (PARVALGITTVLTMTTQSSGS) threads the bilayer. Over 305–315 (RASLPKVSYVK) the chain is Extracellular. A helical transmembrane segment spans residues 316 to 336 (AIDIWMAVCLLFVFAALLEYA). The Cytoplasmic segment spans residues 337 to 420 (AVNFVSRQHK…FVDRAKRIDT (84 aa)). The helical transmembrane segment at 421-441 (ISRAAFPLAFLIFNIFYWITY) threads the bilayer. The Extracellular portion of the chain corresponds to 442 to 452 (KIIRHEDVHKK).

Belongs to the ligand-gated ion channel (TC 1.A.9) family. Glycine receptor (TC 1.A.9.3) subfamily. GLRA2 sub-subfamily. Interacts with GLRB. Heteropentamer composed of GLRA2 and GLRB; functional GLRB-GLRA2 heteropentamers contain four GLRA2 subunits and one GLRB subunit, although alternative subunit composition cannot be excluded. Homopentamer (in vitro). Both homopentamers and heteropentamers form functional ion channels, but their characteristics are subtly different. As to expression, detected in the retina inner plexiform layer (at protein level). Detected in neonate retina. Detected in brain. Detected in spinal cord, with higher levels in the dorsal horn.

The protein resides in the postsynaptic cell membrane. It is found in the synapse. It localises to the cell membrane. Its subcellular location is the cell projection. The catalysed reaction is chloride(in) = chloride(out). Its activity is regulated as follows. Channel opening is triggered by extracellular glycine. Channel opening is also triggered by taurine and beta-alanine. Inhibited by strychnine. Inhibited by picrotoxin. In terms of biological role, subunit of heteromeric glycine-gated chloride channels. Plays a role in synaptic plasticity. Contributes to the generation of inhibitory postsynaptic currents, and is involved in the down-regulation of neuronal excitability. Plays a role in cellular responses to ethanol. The chain is Glycine receptor subunit alpha-2 from Mus musculus (Mouse).